Reading from the N-terminus, the 282-residue chain is Formamidopyrimidine-DNA glycosylase (282 aa).

Catalysis depends on Pro-2, which acts as the Schiff-base intermediate with DNA. The active-site Proton donor is Glu-3. Residue Lys-60 is the Proton donor; for beta-elimination activity of the active site. His-99, Arg-118, and Lys-163 together coordinate DNA. An FPG-type zinc finger spans residues 248–282; sequence LVYRRSGKNCKKCGEKILREKICGRSTHWCPNCQK. Arg-272 functions as the Proton donor; for delta-elimination activity in the catalytic mechanism.

It belongs to the FPG family. As to quaternary structure, monomer. The cofactor is Zn(2+).

It catalyses the reaction Hydrolysis of DNA containing ring-opened 7-methylguanine residues, releasing 2,6-diamino-4-hydroxy-5-(N-methyl)formamidopyrimidine.. The enzyme catalyses 2'-deoxyribonucleotide-(2'-deoxyribose 5'-phosphate)-2'-deoxyribonucleotide-DNA = a 3'-end 2'-deoxyribonucleotide-(2,3-dehydro-2,3-deoxyribose 5'-phosphate)-DNA + a 5'-end 5'-phospho-2'-deoxyribonucleoside-DNA + H(+). Functionally, involved in base excision repair of DNA damaged by oxidation or by mutagenic agents. Acts as a DNA glycosylase that recognizes and removes damaged bases. Has a preference for oxidized purines, such as 7,8-dihydro-8-oxoguanine (8-oxoG). Has AP (apurinic/apyrimidinic) lyase activity and introduces nicks in the DNA strand. Cleaves the DNA backbone by beta-delta elimination to generate a single-strand break at the site of the removed base with both 3'- and 5'-phosphates. This Prochlorococcus marinus (strain NATL1A) protein is Formamidopyrimidine-DNA glycosylase.